A 328-amino-acid polypeptide reads, in one-letter code: D-cysteine desulfhydrase (328 aa).

The residue at position 51 (Lys-51) is an N6-(pyridoxal phosphate)lysine.

Belongs to the ACC deaminase/D-cysteine desulfhydrase family. Homodimer. Pyridoxal 5'-phosphate serves as cofactor.

It catalyses the reaction D-cysteine + H2O = hydrogen sulfide + pyruvate + NH4(+) + H(+). Its function is as follows. Catalyzes the alpha,beta-elimination reaction of D-cysteine and of several D-cysteine derivatives. It could be a defense mechanism against D-cysteine. The chain is D-cysteine desulfhydrase from Shigella boydii serotype 18 (strain CDC 3083-94 / BS512).